A 99-amino-acid chain; its full sequence is Large ribosomal subunit protein bL28 (99 aa).

The protein belongs to the bacterial ribosomal protein bL28 family.

The chain is Large ribosomal subunit protein bL28 from Caulobacter vibrioides (strain ATCC 19089 / CIP 103742 / CB 15) (Caulobacter crescentus).